The sequence spans 65 residues: Photosystem II reaction center protein J (65 aa).

Residues 35–55 traverse the membrane as a helical segment; the sequence is LWLVATAGGTAVIFVLGIFFY.

The protein belongs to the PsbJ family. PSII is composed of 1 copy each of membrane proteins PsbA, PsbB, PsbC, PsbD, PsbE, PsbF, PsbH, PsbI, PsbJ, PsbK, PsbL, PsbM, PsbT, PsbX, PsbY, Psb30/Ycf12, peripheral proteins PsbO, CyanoQ (PsbQ), PsbU, PsbV and a large number of cofactors. It forms dimeric complexes.

The protein localises to the cellular thylakoid membrane. Functionally, one of the components of the core complex of photosystem II (PSII). PSII is a light-driven water:plastoquinone oxidoreductase that uses light energy to abstract electrons from H(2)O, generating O(2) and a proton gradient subsequently used for ATP formation. It consists of a core antenna complex that captures photons, and an electron transfer chain that converts photonic excitation into a charge separation. The polypeptide is Photosystem II reaction center protein J (Prochlorococcus marinus (strain NATL1A)).